Reading from the N-terminus, the 917-residue chain is DNA repair endonuclease XPF (917 aa).

The segment at 1–457 is helicase-like; the sequence is MEPGLSGERR…EVWVNVRKGD (457 aa). Leucine-zipper stretches follow at residues 233 to 254 and 270 to 298; these read LNAC…DLSL and LDPL…LQYL. Lys-289 carries the post-translational modification N6-acetyllysine. Residues 454–479 show a composition bias toward basic and acidic residues; it reads RKGDGPKRTTKSDKRPKAAPNKERAS. Disordered stretches follow at residues 454-524 and 643-681; these read RKGD…SSPE and VPEE…QNGT. Residues 487-492 carry the Nuclear localization signal motif; sequence KRKKQE. Residues 507–516 show a composition bias toward basic and acidic residues; the sequence is EDKALEEDLC. Phosphoserine is present on Ser-522. Basic and acidic residues predominate over residues 643-653; it reads VPEEREGRDET. The segment at 659 to 814 is nuclease; sequence RGSAALDAPT…PSPHATAELF (156 aa). The ERCC4 domain maps to 684 to 764; sequence SIVVDMREFR…RPVLLIEFDP (81 aa). Ser-765 is subject to Phosphoserine. The hhH2, dimerization with ERCC1 stretch occupies residues 838-906; sequence TLPESDRYNP…QLHDFLHTAY (69 aa). Position 912 is an N6-acetyllysine (Lys-912).

This sequence belongs to the XPF family. Heterodimer composed of ERCC1 and ERCC4/XPF. Interacts with SLX4/BTBD12; this interaction is direct and links the ERCC1-ERCC4/XPF complex to SLX4, which may coordinate the action of the structure-specific endonuclease during DNA repair. Mg(2+) is required as a cofactor. Acetylation at Lys-912 by KAT5 promotes interaction with ERCC1 by disrupting a salt bridge between Asp-908 and Lys-912, thereby exposing a second binding site for ERCC1. Deacetylated by SIRT1.

It is found in the nucleus. It localises to the chromosome. Functionally, catalytic component of a structure-specific DNA repair endonuclease responsible for the 5-prime incision during DNA repair, and which is essential for nucleotide excision repair (NER) and interstrand cross-link (ICL) repair. This Mus musculus (Mouse) protein is DNA repair endonuclease XPF.